The primary structure comprises 301 residues: GLABROUS1 enhancer-binding protein-like 2 (301 aa).

The disordered stretch occupies residues Met-1–Asn-62. Positions Lys-44–Thr-54 are enriched in basic residues. The non-canonical leucine-zipper stretch occupies residues Leu-268–Phe-289.

This sequence belongs to the GeBP family. In terms of assembly, homo- and heterodimers. Interacts with GEBP, GPL1 and GPL3. As to expression, expressed in the apical meristem and young leaf primordia. Detected in the vascular tissues of cotyledons and leaves, in hydathodes and in the septun of siliques, but not in roots.

It localises to the nucleus. Probable transcription factor. May play redundant roles with GEBP and GPL1 in cytokinin responses by regulating the transcript levels of type-A ARR response genes. Involved in stress responses. Plays a repressive role in cell expansion by counteracting the positive role of CPR5 in this process, but does not regulate cell proliferation or endoreduplication. This is GLABROUS1 enhancer-binding protein-like 2 from Arabidopsis thaliana (Mouse-ear cress).